The sequence spans 463 residues: UDP-N-acetylmuramoylalanine--D-glutamate ligase (463 aa).

109-115 (GTDGKST) contributes to the ATP binding site.

The protein belongs to the MurCDEF family.

It localises to the cytoplasm. It catalyses the reaction UDP-N-acetyl-alpha-D-muramoyl-L-alanine + D-glutamate + ATP = UDP-N-acetyl-alpha-D-muramoyl-L-alanyl-D-glutamate + ADP + phosphate + H(+). Its pathway is cell wall biogenesis; peptidoglycan biosynthesis. In terms of biological role, cell wall formation. Catalyzes the addition of glutamate to the nucleotide precursor UDP-N-acetylmuramoyl-L-alanine (UMA). This is UDP-N-acetylmuramoylalanine--D-glutamate ligase from Leptospira interrogans serogroup Icterohaemorrhagiae serovar copenhageni (strain Fiocruz L1-130).